We begin with the raw amino-acid sequence, 697 residues long: Methionine--tRNA ligase (697 aa).

The short motif at 11–21 (PYANGPIHLGH) is the 'HIGH' region element. The Zn(2+) site is built by cysteine 142, cysteine 145, cysteine 155, and cysteine 158. Residues 343–347 (KMSKS) carry the 'KMSKS' region motif. Lysine 346 is an ATP binding site. The region spanning 595–697 (DFMKVEMTVA…DECKVGDKLA (103 aa)) is the tRNA-binding domain.

The protein belongs to the class-I aminoacyl-tRNA synthetase family. MetG type 1 subfamily. In terms of assembly, homodimer. Zn(2+) serves as cofactor.

The protein localises to the cytoplasm. It carries out the reaction tRNA(Met) + L-methionine + ATP = L-methionyl-tRNA(Met) + AMP + diphosphate. Functionally, is required not only for elongation of protein synthesis but also for the initiation of all mRNA translation through initiator tRNA(fMet) aminoacylation. In Psychrobacter sp. (strain PRwf-1), this protein is Methionine--tRNA ligase.